The chain runs to 295 residues: Glycine N-methyltransferase (295 aa).

N-acetylvaline is present on V2. 2 residues coordinate (6S)-5-methyl-5,6,7,8-tetrahydrofolate: S4 and Y6. S10 carries the phosphoserine modification. S-adenosyl-L-methionine contacts are provided by Y22, W31, Y34, and R41. Y34 is modified (phosphotyrosine). Position 46 is an N6-succinyllysine (K46). S-adenosyl-L-methionine-binding positions include A65, 86 to 88 (DAS), 117 to 118 (NW), 139 to 142 (LGNS), and R178. K193, K198, and K203 each carry N6-succinyllysine. Residue H217 coordinates (6S)-5-methyl-5,6,7,8-tetrahydrofolate. Y223 contacts S-adenosyl-L-methionine. A (6S)-5-methyl-5,6,7,8-tetrahydrofolate-binding site is contributed by R242.

The protein belongs to the class I-like SAM-binding methyltransferase superfamily. Glycine N-methyltransferase family. In terms of assembly, homotetramer. Expressed only in liver, pancreas, and prostate.

The protein resides in the cytoplasm. The enzyme catalyses glycine + S-adenosyl-L-methionine = sarcosine + S-adenosyl-L-homocysteine + H(+). Inhibited by 5-methyltetrahydrofolate monoglutamate and by 5-methyltetrahydrofolate pentaglutamate, inhibition is much more effective by the pentaglutamate form than by the monoglutamate form. Two molecules of 5-methyltetrahydrofolate are bound per tetramer. The binding sites are localized between subunits. Inhibitor binding may preclude movements of the polypeptide chain that are necessary for enzyme activity. Its function is as follows. Catalyzes the methylation of glycine by using S-adenosylmethionine (AdoMet) to form N-methylglycine (sarcosine) with the concomitant production of S-adenosylhomocysteine (AdoHcy), a reaction regulated by the binding of 5-methyltetrahydrofolate. Plays an important role in the regulation of methyl group metabolism by regulating the ratio between S-adenosyl-L-methionine and S-adenosyl-L-homocysteine. This chain is Glycine N-methyltransferase, found in Homo sapiens (Human).